A 572-amino-acid polypeptide reads, in one-letter code: Methionine--tRNA ligase (572 aa).

The 'HIGH' region signature appears at 11–21; sequence PYINGIKHLGN. Residues Cys143, Cys146, Cys156, and Cys159 each coordinate Zn(2+). The 'KMSKS' region signature appears at 346–350; it reads QFSTS. Thr349 contacts ATP.

Belongs to the class-I aminoacyl-tRNA synthetase family. MetG type 1 subfamily. As to quaternary structure, monomer. Requires Zn(2+) as cofactor.

Its subcellular location is the cytoplasm. It carries out the reaction tRNA(Met) + L-methionine + ATP = L-methionyl-tRNA(Met) + AMP + diphosphate. Is required not only for elongation of protein synthesis but also for the initiation of all mRNA translation through initiator tRNA(fMet) aminoacylation. In Paracoccus denitrificans (strain Pd 1222), this protein is Methionine--tRNA ligase.